Consider the following 364-residue polypeptide: NADH-quinone oxidoreductase subunit H (364 aa).

Helical transmembrane passes span 21-41 (AGQI…LLLA), 88-108 (VFLL…AVIP), 120-140 (VGIL…IMGG), 159-179 (MVSY…LAGS), 208-228 (LPLL…GLAE), 267-287 (IVLI…APFP), 301-321 (FYYF…VSMA), and 340-360 (VFLP…VFGP).

This sequence belongs to the complex I subunit 1 family. NDH-1 is composed of 14 different subunits. Subunits NuoA, H, J, K, L, M, N constitute the membrane sector of the complex.

It is found in the cell inner membrane. It catalyses the reaction a quinone + NADH + 5 H(+)(in) = a quinol + NAD(+) + 4 H(+)(out). In terms of biological role, NDH-1 shuttles electrons from NADH, via FMN and iron-sulfur (Fe-S) centers, to quinones in the respiratory chain. The immediate electron acceptor for the enzyme in this species is believed to be ubiquinone. Couples the redox reaction to proton translocation (for every two electrons transferred, four hydrogen ions are translocated across the cytoplasmic membrane), and thus conserves the redox energy in a proton gradient. This subunit may bind ubiquinone. This chain is NADH-quinone oxidoreductase subunit H, found in Phenylobacterium zucineum (strain HLK1).